The following is a 453-amino-acid chain: GTPase Der (453 aa).

2 consecutive EngA-type G domains span residues 3–167 (PIIV…ISEK) and 187–360 (IKVA…EDSK). GTP is bound by residues 9–16 (GRTNVGKS), 57–61 (DTAGL), 119–122 (NKID), 193–200 (GRPNVGKS), 240–244 (DTAGA), and 305–308 (NKCD). The 85-residue stretch at 361-445 (RKISTSTLIR…PIQIQFKDNE (85 aa)) folds into the KH-like domain.

It belongs to the TRAFAC class TrmE-Era-EngA-EngB-Septin-like GTPase superfamily. EngA (Der) GTPase family. Associates with the 50S ribosomal subunit.

Its function is as follows. GTPase that plays an essential role in the late steps of ribosome biogenesis. The chain is GTPase Der from Buchnera aphidicola subsp. Acyrthosiphon pisum (strain Tuc7).